A 383-amino-acid chain; its full sequence is Deoxyguanosinetriphosphate triphosphohydrolase-like protein (383 aa).

The 137-residue stretch at 62-198 (RLTHSLEVST…AALADDISYI (137 aa)) folds into the HD domain.

Belongs to the dGTPase family. Type 2 subfamily.

This chain is Deoxyguanosinetriphosphate triphosphohydrolase-like protein, found in Rickettsia bellii (strain RML369-C).